Consider the following 445-residue polypeptide: Rab GDP dissociation inhibitor beta (445 aa).

M1 carries the N-acetylmethionine modification. Residue K57 is modified to N6-succinyllysine. K112 is modified (N6-acetyllysine). Position 130 is a phosphoserine (S130). K269 bears the N6-acetyllysine mark. S382 is modified (phosphoserine).

The protein belongs to the Rab GDI family. Interacts with RHOH. Interacts with the GDP-bound inactive forms of RAB3A, RAB3B, RAB3C, RAB5A, RAB5B, RAB5C, RAB8A, RAB8B, RAB10, RAB12, RAB35, and RAB43; binds RAB3D to a lesser extent. Interacts with DZIP1; this interaction negatively regulates the interaction of GDI2 with GDP-bound RAB8A.

The protein resides in the cytoplasm. It is found in the membrane. Its subcellular location is the golgi apparatus. It localises to the trans-Golgi network. In terms of biological role, GDP-dissociation inhibitor preventing the GDP to GTP exchange of most Rab proteins. By keeping these small GTPases in their inactive GDP-bound form regulates intracellular membrane trafficking. Negatively regulates protein transport to the cilium and ciliogenesis through the inhibition of RAB8A. The polypeptide is Rab GDP dissociation inhibitor beta (GDI2) (Pongo abelii (Sumatran orangutan)).